Reading from the N-terminus, the 618-residue chain is Proline--tRNA ligase (618 aa).

Belongs to the class-II aminoacyl-tRNA synthetase family. ProS type 1 subfamily. As to quaternary structure, homodimer.

It is found in the cytoplasm. It carries out the reaction tRNA(Pro) + L-proline + ATP = L-prolyl-tRNA(Pro) + AMP + diphosphate. Catalyzes the attachment of proline to tRNA(Pro) in a two-step reaction: proline is first activated by ATP to form Pro-AMP and then transferred to the acceptor end of tRNA(Pro). As ProRS can inadvertently accommodate and process non-cognate amino acids such as alanine and cysteine, to avoid such errors it has two additional distinct editing activities against alanine. One activity is designated as 'pretransfer' editing and involves the tRNA(Pro)-independent hydrolysis of activated Ala-AMP. The other activity is designated 'posttransfer' editing and involves deacylation of mischarged Ala-tRNA(Pro). The misacylated Cys-tRNA(Pro) is not edited by ProRS. The protein is Proline--tRNA ligase of Streptococcus pyogenes serotype M12 (strain MGAS2096).